Reading from the N-terminus, the 285-residue chain is 2-dehydro-3-deoxyphosphooctonate aldolase (285 aa).

This sequence belongs to the KdsA family.

The protein resides in the cytoplasm. The catalysed reaction is D-arabinose 5-phosphate + phosphoenolpyruvate + H2O = 3-deoxy-alpha-D-manno-2-octulosonate-8-phosphate + phosphate. It functions in the pathway carbohydrate biosynthesis; 3-deoxy-D-manno-octulosonate biosynthesis; 3-deoxy-D-manno-octulosonate from D-ribulose 5-phosphate: step 2/3. Its pathway is bacterial outer membrane biogenesis; lipopolysaccharide biosynthesis. This Paracidovorax citrulli (strain AAC00-1) (Acidovorax citrulli) protein is 2-dehydro-3-deoxyphosphooctonate aldolase.